A 185-amino-acid chain; its full sequence is MKTAQELRSGNVIMVGADALVVQKAEYNKSGRNSAVVKMKLKNLLTGAPSESVYKADDKFEVVQLDKKEVTYSYFADPMYVFMDADYEQYEVEAENMTDALKYLEDGLQCEVVFYNGKAISVDLPNSVVREVIYTEPAVKGDTSGKVMKPAKIASGFELPVPAFVEIGDKIEIDTRTDEYKNRVK.

It belongs to the elongation factor P family.

Its subcellular location is the cytoplasm. It participates in protein biosynthesis; polypeptide chain elongation. In terms of biological role, involved in peptide bond synthesis. Stimulates efficient translation and peptide-bond synthesis on native or reconstituted 70S ribosomes in vitro. Probably functions indirectly by altering the affinity of the ribosome for aminoacyl-tRNA, thus increasing their reactivity as acceptors for peptidyl transferase. In Aromatoleum aromaticum (strain DSM 19018 / LMG 30748 / EbN1) (Azoarcus sp. (strain EbN1)), this protein is Elongation factor P.